The primary structure comprises 218 residues: Cytochrome b6 (218 aa).

A helical membrane pass occupies residues 35 to 55 (IFYCLGGITLVCFLIQFATGF). Cys38 serves as a coordination point for heme c. Heme b is bound by residues His89 and His103. 3 helical membrane passes run 93–113 (ASMM…TGGF), 119–139 (LTWV…VTGY), and 189–209 (LHTF…FLMI). Positions 190 and 205 each coordinate heme b.

It belongs to the cytochrome b family. PetB subfamily. The 4 large subunits of the cytochrome b6-f complex are cytochrome b6, subunit IV (17 kDa polypeptide, PetD), cytochrome f and the Rieske protein, while the 4 small subunits are PetG, PetL, PetM and PetN. The complex functions as a dimer. It depends on heme b as a cofactor. Requires heme c as cofactor.

It localises to the cellular thylakoid membrane. Functionally, component of the cytochrome b6-f complex, which mediates electron transfer between photosystem II (PSII) and photosystem I (PSI), cyclic electron flow around PSI, and state transitions. This Prochlorococcus marinus (strain MIT 9211) protein is Cytochrome b6.